The following is a 699-amino-acid chain: SHC SH2 domain-binding protein 1 homolog A (699 aa).

PbH1 repeat units follow at residues 480 to 502 (SAELLMKYSDLYGAKGAGMEIYP), 503 to 524 (GSKCTLIGNGIHHCRDGILIKD), and 532 to 554 (IPKITMENNVIHNNEGYAVVLVK). Residues 603-627 (AVEHTNNLEKDQGNLAIAKEEVECE) adopt a coiled-coil conformation.

Its subcellular location is the midbody. It localises to the cytoplasm. The protein resides in the cytoskeleton. The protein localises to the spindle. May play a role in signaling pathways governing cellular proliferation. This Xenopus laevis (African clawed frog) protein is SHC SH2 domain-binding protein 1 homolog A (shcbp1-a).